The chain runs to 425 residues: MSTIVDVFAREVLDSRGNPTVEVEVFLEDGTMGRAIVPSGASTGAHEAVELRDGDSKRYLGKGVLQAVDNVNMIIAPEVIGMDATAQIDIDQLMIDLDNTPNKAKLGANAIMGVSLATARAAATHLAIPLYQYIGGVNAREIPVPMMNILNGGKHADNNVDIQEFMIVPSGAPNFAEGLRMGVEVYHSLKKVLNNKGLGSGVGDEGGFAPNLPSNEAALDLILEAIAAAGYQAGSDINLALDVAATELFKDGKYHLASSGQVLSSSEMVDFYAQMLEKYPLISLEDGLAEDDWDGWKQLTERLGSKIQLVGDDLFVTNSQRLARGIEEGVCNSILIKVNQIGTLSETLNTIEMARRAGYTCVISHRSGETEDSTIADIAVATNAGQIKTGAPARSDRVAKYNQLLRIEEELDVFAVYRGIKAFKR.

(2R)-2-phosphoglycerate is bound at residue Gln163. The active-site Proton donor is Glu205. Positions 242, 285, and 312 each coordinate Mg(2+). Residues Lys337, Arg366, Ser367, and Lys388 each contribute to the (2R)-2-phosphoglycerate site. Lys337 (proton acceptor) is an active-site residue.

It belongs to the enolase family. It depends on Mg(2+) as a cofactor.

It localises to the cytoplasm. It is found in the secreted. Its subcellular location is the cell surface. The catalysed reaction is (2R)-2-phosphoglycerate = phosphoenolpyruvate + H2O. It functions in the pathway carbohydrate degradation; glycolysis; pyruvate from D-glyceraldehyde 3-phosphate: step 4/5. In terms of biological role, catalyzes the reversible conversion of 2-phosphoglycerate (2-PG) into phosphoenolpyruvate (PEP). It is essential for the degradation of carbohydrates via glycolysis. The protein is Enolase of Syntrophomonas wolfei subsp. wolfei (strain DSM 2245B / Goettingen).